The sequence spans 209 residues: Orotate phosphoribosyltransferase (209 aa).

Residues arginine 96, lysine 100, histidine 102, and 122–130 (EDLISTGGS) each bind 5-phospho-alpha-D-ribose 1-diphosphate. Serine 126 is a binding site for orotate.

It belongs to the purine/pyrimidine phosphoribosyltransferase family. PyrE subfamily. Homodimer. The cofactor is Mg(2+).

The catalysed reaction is orotidine 5'-phosphate + diphosphate = orotate + 5-phospho-alpha-D-ribose 1-diphosphate. It functions in the pathway pyrimidine metabolism; UMP biosynthesis via de novo pathway; UMP from orotate: step 1/2. In terms of biological role, catalyzes the transfer of a ribosyl phosphate group from 5-phosphoribose 1-diphosphate to orotate, leading to the formation of orotidine monophosphate (OMP). This Streptococcus pyogenes serotype M5 (strain Manfredo) protein is Orotate phosphoribosyltransferase.